Here is a 248-residue protein sequence, read N- to C-terminus: 21S rRNA pseudouridine(2819) synthase (248 aa).

The active site involves D58.

This sequence belongs to the pseudouridine synthase RluA family.

Its subcellular location is the mitochondrion. The catalysed reaction is uridine(2819) in 21S rRNA = pseudouridine(2819) in 21S rRNA. Pseudouridylate synthase responsible for the pseudouridine-2819 formation in mitochondrial 21S rRNA. May modulate the efficiency or the fidelity of the mitochondrial translation machinery. The chain is 21S rRNA pseudouridine(2819) synthase (PUS5) from Candida albicans (strain SC5314 / ATCC MYA-2876) (Yeast).